Consider the following 67-residue polypeptide: SPbeta prophage-derived uncharacterized protein YoqK (67 aa).

This is SPbeta prophage-derived uncharacterized protein YoqK (yoqK) from Bacillus subtilis (strain 168).